Reading from the N-terminus, the 166-residue chain is EndA-like protein (166 aa).

Belongs to the tRNA-intron endonuclease family. Archaeal short subfamily.

The sequence is that of EndA-like protein from Methanopyrus kandleri (strain AV19 / DSM 6324 / JCM 9639 / NBRC 100938).